Reading from the N-terminus, the 359-residue chain is Type-1 angiotensin II receptor (359 aa).

Topologically, residues 1–25 (MILNSSTEDGIKRIQDDCPKAGRHN) are extracellular. An N-linked (GlcNAc...) asparagine glycan is attached at Asn4. Residues Gln15 and Asp17 each contribute to the angiotensin II site. Cystine bridges form between Cys18–Cys274 and Cys101–Cys180. A helical membrane pass occupies residues 26-55 (YIFVMIPTLYSIIFVVGIFGNSLVVIVIYF). Residues 56–61 (YMKLKT) lie on the Cytoplasmic side of the membrane. A helical membrane pass occupies residues 62–89 (VASVFLLNLALADLCFLLTLPLWAVYTA). Residues 90–98 (MEYRWPFGN) are Extracellular-facing. Residues 99–125 (YLCKIASASVSFNLYASVFLLTCLSID) form a helical membrane-spanning segment. The Cytoplasmic segment spans residues 126 to 141 (RYLAIVHPMKSRLRRT). Residues 142–165 (MLVAKVTCIIIWLLAGLASLPAII) form a helical membrane-spanning segment. Residues 166-190 (HRNVFFIENTNITVCAFHYESQNST) lie on the Extracellular side of the membrane. Arg167 contacts angiotensin II. Asn176 carries N-linked (GlcNAc...) asparagine glycosylation. Residues Phe182, His183, and Tyr184 each coordinate angiotensin II. Residue Asn188 is glycosylated (N-linked (GlcNAc...) asparagine). Residues 191 to 216 (LPIGLGLTKNILGFLFPFLIILTSYT) form a helical membrane-spanning segment. Lys199 serves as a coordination point for angiotensin II. Residues 217–239 (LIWKALKKAYEIQKNKPRNDDIF) lie on the Cytoplasmic side of the membrane. Residues 240 to 268 (KIIMAIVLFFFFSWIPHQIFTFLDVLIQL) traverse the membrane as a helical segment. The Extracellular portion of the chain corresponds to 269–278 (GIIRDCRIAD). A helical membrane pass occupies residues 279 to 304 (IVDTAMPITICIAYFNNCLNPLFYGF). At 305–359 (LGKKFKKYFLQLLKYIPPKAKSHSNLSTKMSTLSYRPSDNVSSSTKKPAPCFEVE) the chain is on the cytoplasmic side. Residues 335–350 (STLSYRPSDNVSSSTK) are compositionally biased toward polar residues. Positions 335–359 (STLSYRPSDNVSSSTKKPAPCFEVE) are disordered. The S-palmitoyl cysteine moiety is linked to residue Cys355.

Belongs to the G-protein coupled receptor 1 family. Interacts with MAS1. Interacts with ARRB1. Interacts with FLNA (via filamin repeat 21); increases PKA-mediated phosphorylation of FLNA. Post-translationally, C-terminal Ser or Thr residues may be phosphorylated.

The protein localises to the cell membrane. Receptor for angiotensin II, a vasoconstricting peptide, which acts as a key regulator of blood pressure and sodium retention by the kidney. The activated receptor in turn couples to G-alpha proteins G(q) (GNAQ, GNA11, GNA14 or GNA15) and thus activates phospholipase C and increases the cytosolic Ca(2+) concentrations, which in turn triggers cellular responses such as stimulation of protein kinase C. The polypeptide is Type-1 angiotensin II receptor (AGTR1) (Pan troglodytes (Chimpanzee)).